We begin with the raw amino-acid sequence, 1420 residues long: DNA-directed RNA polymerase subunit beta' (1420 aa).

Zn(2+) is bound by residues cysteine 70, cysteine 72, cysteine 85, and cysteine 88. Residues aspartate 464, aspartate 466, and aspartate 468 each coordinate Mg(2+). Zn(2+) is bound by residues cysteine 823, cysteine 897, cysteine 904, and cysteine 907.

This sequence belongs to the RNA polymerase beta' chain family. As to quaternary structure, the RNAP catalytic core consists of 2 alpha, 1 beta, 1 beta' and 1 omega subunit. When a sigma factor is associated with the core the holoenzyme is formed, which can initiate transcription. Requires Mg(2+) as cofactor. It depends on Zn(2+) as a cofactor.

It catalyses the reaction RNA(n) + a ribonucleoside 5'-triphosphate = RNA(n+1) + diphosphate. Its function is as follows. DNA-dependent RNA polymerase catalyzes the transcription of DNA into RNA using the four ribonucleoside triphosphates as substrates. In Polynucleobacter necessarius subsp. necessarius (strain STIR1), this protein is DNA-directed RNA polymerase subunit beta'.